A 383-amino-acid polypeptide reads, in one-letter code: ATP phosphoribosyltransferase regulatory subunit (383 aa).

The protein belongs to the class-II aminoacyl-tRNA synthetase family. HisZ subfamily. Heteromultimer composed of HisG and HisZ subunits.

It localises to the cytoplasm. Its pathway is amino-acid biosynthesis; L-histidine biosynthesis; L-histidine from 5-phospho-alpha-D-ribose 1-diphosphate: step 1/9. Its function is as follows. Required for the first step of histidine biosynthesis. May allow the feedback regulation of ATP phosphoribosyltransferase activity by histidine. This Chromobacterium violaceum (strain ATCC 12472 / DSM 30191 / JCM 1249 / CCUG 213 / NBRC 12614 / NCIMB 9131 / NCTC 9757 / MK) protein is ATP phosphoribosyltransferase regulatory subunit.